Consider the following 474-residue polypeptide: Probable CAAX prenyl protease 1 (474 aa).

The next 3 helical transmembrane spans lie at 103 to 123, 196 to 216, and 230 to 250; these read SWFS…IIKY, IFVI…SVVV, and FIMY…TIAP. Histidine 332 contacts Zn(2+). Glutamate 333 is an active-site residue. Histidine 336 is a Zn(2+) binding site. 2 helical membrane passes run 344-364 and 381-401; these read INTI…AAFI and VIVG…ILTF. Glutamate 411 is a binding site for Zn(2+). Catalysis depends on aspartate 415, which acts as the Proton donor.

The protein belongs to the peptidase M48A family. Requires Zn(2+) as cofactor.

The protein resides in the endoplasmic reticulum membrane. The catalysed reaction is Hydrolyzes the peptide bond -P2-(S-farnesyl or geranylgeranyl)C-P1'-P2'-P3'-COOH where P1' and P2' are amino acids with aliphatic side chains and P3' is any C-terminal residue.. Proteolytically removes the C-terminal three residues of farnesylated proteins. This Schizosaccharomyces pombe (strain 972 / ATCC 24843) (Fission yeast) protein is Probable CAAX prenyl protease 1.